A 459-amino-acid chain; its full sequence is tRNA modification GTPase MnmE (459 aa).

(6S)-5-formyl-5,6,7,8-tetrahydrofolate-binding residues include Arg-29, Glu-91, and Arg-130. Residues 225–381 (GVKVAIVGRP…LEEALEQLVT (157 aa)) enclose the TrmE-type G domain. Asn-235 serves as a coordination point for K(+). GTP contacts are provided by residues 235-240 (NVGKSS), 254-260 (TDLPGTT), and 279-282 (DTAG). Ser-239 serves as a coordination point for Mg(2+). K(+)-binding residues include Thr-254, Leu-256, and Thr-259. Position 260 (Thr-260) interacts with Mg(2+). Lys-459 provides a ligand contact to (6S)-5-formyl-5,6,7,8-tetrahydrofolate.

The protein belongs to the TRAFAC class TrmE-Era-EngA-EngB-Septin-like GTPase superfamily. TrmE GTPase family. In terms of assembly, homodimer. Heterotetramer of two MnmE and two MnmG subunits. K(+) serves as cofactor.

The protein resides in the cytoplasm. In terms of biological role, exhibits a very high intrinsic GTPase hydrolysis rate. Involved in the addition of a carboxymethylaminomethyl (cmnm) group at the wobble position (U34) of certain tRNAs, forming tRNA-cmnm(5)s(2)U34. This chain is tRNA modification GTPase MnmE, found in Synechococcus sp. (strain JA-3-3Ab) (Cyanobacteria bacterium Yellowstone A-Prime).